Here is a 246-residue protein sequence, read N- to C-terminus: V-type proton ATPase subunit D (246 aa).

It belongs to the V-ATPase D subunit family. As to quaternary structure, V-ATPase is a heteromultimeric enzyme made up of two complexes: the ATP-hydrolytic V1 complex and the proton translocation V0 complex. The V1 complex consists of three catalytic AB heterodimers that form a heterohexamer, three peripheral stalks each consisting of EG heterodimers, one central rotor including subunits D and F, and the regulatory subunits C and H. The proton translocation complex V0 consists of the proton transport subunit a, a ring of proteolipid subunits c9c'', rotary subunit d, subunits e and f, and the accessory subunits VhaAC45 and ATP6AP2.

In terms of biological role, subunit of the V1 complex of vacuolar(H+)-ATPase (V-ATPase), a multisubunit enzyme composed of a peripheral complex (V1) that hydrolyzes ATP and a membrane integral complex (V0) that translocates protons. V-ATPase is responsible for acidifying and maintaining the pH of intracellular compartments and in some cell types, is targeted to the plasma membrane, where it is responsible for acidifying the extracellular environment. This chain is V-type proton ATPase subunit D, found in Manduca sexta (Tobacco hawkmoth).